We begin with the raw amino-acid sequence, 341 residues long: Methionine import ATP-binding protein MetN 3 (341 aa).

The region spanning 2–241 is the ABC transporter domain; it reads ILLENVKKIY…PQQDITKRFV (240 aa). 38–45 contributes to the ATP binding site; sequence GYSGAGKS.

The protein belongs to the ABC transporter superfamily. Methionine importer (TC 3.A.1.24) family. As to quaternary structure, the complex is composed of two ATP-binding proteins (MetN), two transmembrane proteins (MetI) and a solute-binding protein (MetQ).

It is found in the cell membrane. It catalyses the reaction L-methionine(out) + ATP + H2O = L-methionine(in) + ADP + phosphate + H(+). It carries out the reaction D-methionine(out) + ATP + H2O = D-methionine(in) + ADP + phosphate + H(+). In terms of biological role, part of the ABC transporter complex MetNIQ involved in methionine import. Responsible for energy coupling to the transport system. This Bacillus cereus (strain ZK / E33L) protein is Methionine import ATP-binding protein MetN 3.